We begin with the raw amino-acid sequence, 640 residues long: 1-deoxy-D-xylulose-5-phosphate synthase (640 aa).

Thiamine diphosphate-binding positions include His77 and 118-120 (AHA). A Mg(2+)-binding site is contributed by Asp149. Thiamine diphosphate contacts are provided by residues 150 to 151 (GS), Asn178, Tyr287, and Glu369. Asn178 provides a ligand contact to Mg(2+).

It belongs to the transketolase family. DXPS subfamily. In terms of assembly, homodimer. The cofactor is Mg(2+). Thiamine diphosphate is required as a cofactor.

The catalysed reaction is D-glyceraldehyde 3-phosphate + pyruvate + H(+) = 1-deoxy-D-xylulose 5-phosphate + CO2. The protein operates within metabolic intermediate biosynthesis; 1-deoxy-D-xylulose 5-phosphate biosynthesis; 1-deoxy-D-xylulose 5-phosphate from D-glyceraldehyde 3-phosphate and pyruvate: step 1/1. Its function is as follows. Catalyzes the acyloin condensation reaction between C atoms 2 and 3 of pyruvate and glyceraldehyde 3-phosphate to yield 1-deoxy-D-xylulose-5-phosphate (DXP). The polypeptide is 1-deoxy-D-xylulose-5-phosphate synthase (Caulobacter vibrioides (strain NA1000 / CB15N) (Caulobacter crescentus)).